We begin with the raw amino-acid sequence, 318 residues long: Protoheme IX farnesyltransferase (318 aa).

Transmembrane regions (helical) follow at residues 29 to 49, 51 to 71, 102 to 122, 123 to 143, 151 to 171, 179 to 199, 219 to 239, 241 to 261, and 280 to 300; these read IIPLLLITTAGSMWIAAQGQV, PVLLLVTMAGGTLAAASAQTI, LIFAIALAVLSFTLLTVFANL, LAASLALSGIIFYVLIYTHWL, IVIGGAAGAIPALVGWAAVTG, LIFAIVFLWTPPHFWALALMI, ATVKQIWYYTLITVAATLLLV, PLHASGIVYAAIAISLGAVFI, and LFLYSISYMMLLCLGMVVDSL.

Belongs to the UbiA prenyltransferase family. Protoheme IX farnesyltransferase subfamily.

Its subcellular location is the cell inner membrane. The enzyme catalyses heme b + (2E,6E)-farnesyl diphosphate + H2O = Fe(II)-heme o + diphosphate. The protein operates within porphyrin-containing compound metabolism; heme O biosynthesis; heme O from protoheme: step 1/1. Functionally, converts heme B (protoheme IX) to heme O by substitution of the vinyl group on carbon 2 of heme B porphyrin ring with a hydroxyethyl farnesyl side group. This is Protoheme IX farnesyltransferase from Nostoc sp. (strain PCC 7120 / SAG 25.82 / UTEX 2576).